The chain runs to 249 residues: Proteasome activator complex subunit 1 (249 aa).

Positions 60–102 are disordered; sequence PLDIPVPDPVKEKEKEERKKQQEKEDKDEKKKGEDEDKGPPCG. Basic and acidic residues predominate over residues 68–98; the sequence is PVKEKEKEERKKQQEKEDKDEKKKGEDEDKG.

The protein belongs to the PA28 family. In terms of assembly, heterodimer of PSME1 and PSME2, which forms a hexameric ring. PSME1 can form homoheptamers.

Its function is as follows. Implicated in immunoproteasome assembly and required for efficient antigen processing. The PA28 activator complex enhances the generation of class I binding peptides by altering the cleavage pattern of the proteasome. This is Proteasome activator complex subunit 1 (PSME1) from Homo sapiens (Human).